A 206-amino-acid polypeptide reads, in one-letter code: Dephospho-CoA kinase (206 aa).

Positions 4–200 constitute a DPCK domain; it reads IVALTGGIGS…AHYLQLASQF (197 aa). 12-17 provides a ligand contact to ATP; the sequence is GSGKST.

The protein belongs to the CoaE family.

Its subcellular location is the cytoplasm. It catalyses the reaction 3'-dephospho-CoA + ATP = ADP + CoA + H(+). It participates in cofactor biosynthesis; coenzyme A biosynthesis; CoA from (R)-pantothenate: step 5/5. In terms of biological role, catalyzes the phosphorylation of the 3'-hydroxyl group of dephosphocoenzyme A to form coenzyme A. In Shigella boydii serotype 4 (strain Sb227), this protein is Dephospho-CoA kinase.